A 140-amino-acid polypeptide reads, in one-letter code: Ribosomal RNA large subunit methyltransferase H (140 aa).

S-adenosyl-L-methionine contacts are provided by L55 and G87.

It belongs to the RNA methyltransferase RlmH family. As to quaternary structure, homodimer.

It localises to the cytoplasm. The catalysed reaction is pseudouridine(1915) in 23S rRNA + S-adenosyl-L-methionine = N(3)-methylpseudouridine(1915) in 23S rRNA + S-adenosyl-L-homocysteine + H(+). Functionally, specifically methylates the pseudouridine at position 1915 (m3Psi1915) in 23S rRNA. The chain is Ribosomal RNA large subunit methyltransferase H from Erythrobacter litoralis (strain HTCC2594).